Consider the following 97-residue polypeptide: MDPKTSVVPPALHLVDPQIQLTIIRMEDAVVHGQSNAVPKVYPIILRLGSQLSLSMARRNLDSLEARAFQSTPIVVKMTKLATTEELPDEFVVVTAK.

One can recognise a 9b domain in the interval 8 to 97 (VPPALHLVDP…PDEFVVVTAK (90 aa)).

In terms of assembly, homodimer.

The protein localises to the host cytoplasmic vesicle membrane. It is found in the host cytoplasm. In Bat coronavirus 279/2005 (BtCoV), this protein is Protein 9b.